The sequence spans 170 residues: Probable inosine/xanthosine triphosphatase (170 aa).

7-12 (TTNPVK) contributes to the substrate binding site. Asp-37 contacts Mg(2+).

Belongs to the YjjX NTPase family. Homodimer. Mg(2+) serves as cofactor. It depends on Mn(2+) as a cofactor.

The catalysed reaction is XTP + H2O = XDP + phosphate + H(+). It catalyses the reaction ITP + H2O = IDP + phosphate + H(+). In terms of biological role, phosphatase that hydrolyzes non-canonical purine nucleotides such as XTP and ITP to their respective diphosphate derivatives. Probably excludes non-canonical purines from DNA/RNA precursor pool, thus preventing their incorporation into DNA/RNA and avoiding chromosomal lesions. This is Probable inosine/xanthosine triphosphatase from Methanopyrus kandleri (strain AV19 / DSM 6324 / JCM 9639 / NBRC 100938).